Reading from the N-terminus, the 361-residue chain is UDP-N-acetylglucosamine--N-acetylmuramyl-(pentapeptide) pyrophosphoryl-undecaprenol N-acetylglucosamine transferase (361 aa).

Residues 11–13 (TGG), asparagine 124, arginine 164, serine 192, and glutamine 295 contribute to the UDP-N-acetyl-alpha-D-glucosamine site.

It belongs to the glycosyltransferase 28 family. MurG subfamily.

It localises to the cell membrane. The catalysed reaction is di-trans,octa-cis-undecaprenyl diphospho-N-acetyl-alpha-D-muramoyl-L-alanyl-D-glutamyl-meso-2,6-diaminopimeloyl-D-alanyl-D-alanine + UDP-N-acetyl-alpha-D-glucosamine = di-trans,octa-cis-undecaprenyl diphospho-[N-acetyl-alpha-D-glucosaminyl-(1-&gt;4)]-N-acetyl-alpha-D-muramoyl-L-alanyl-D-glutamyl-meso-2,6-diaminopimeloyl-D-alanyl-D-alanine + UDP + H(+). Its pathway is cell wall biogenesis; peptidoglycan biosynthesis. In terms of biological role, cell wall formation. Catalyzes the transfer of a GlcNAc subunit on undecaprenyl-pyrophosphoryl-MurNAc-pentapeptide (lipid intermediate I) to form undecaprenyl-pyrophosphoryl-MurNAc-(pentapeptide)GlcNAc (lipid intermediate II). The protein is UDP-N-acetylglucosamine--N-acetylmuramyl-(pentapeptide) pyrophosphoryl-undecaprenol N-acetylglucosamine transferase of Deinococcus geothermalis (strain DSM 11300 / CIP 105573 / AG-3a).